A 517-amino-acid polypeptide reads, in one-letter code: MEELQLQGYLEKDGSRQQNFLYPLIFQEYIYTLAHDHGLNSSIFDEPMEIVGLGYDNKSSSVLVKRLITRMYQQNSLIYSMNDFNQNRFVGHNNSFYSNFDSKMVSEGFAVIVEIPFSLRLVPSSEEIPKSQNLRSIHSIFPFLEDKLSYLNYVLDILIPYPIHLEILVQILQCWIQDVPSLHFLRLFLHEFHNWNNLITPTKSISVFSKENKRLFRILYNSYVSEYEFVFVFLRKQSYYLRSTSSRAFLERTHFYVKIEHLIDVCHNHFQKILWFFKDSFMHYVRYKGKAILASRGTYLLIKKWKCYLVNFWQYHFHFWSKPYRIHINPFSNYSFYFLGYISSVRINPSAVKNQMLENFYLVDTLTQKFDTIVPVIPLIGSLSKAKFCTILGHPISKPIWAELSDSDIIDRFGRICRNLSHYHSGSSKKQSLYRIKYILRLSCARTLARKHKSTVRNLLQRLGSGLLEEFFTEEEQVISPIFPKTTLFPLHGSHKERIWYLNIIRINDLANYLDWS.

The protein belongs to the intron maturase 2 family. MatK subfamily.

The protein resides in the plastid. Its subcellular location is the chloroplast. Its function is as follows. Usually encoded in the trnK tRNA gene intron. Probably assists in splicing its own and other chloroplast group II introns. The protein is Maturase K of Trillium grandiflorum (Large-flowered trillium).